Here is a 242-residue protein sequence, read N- to C-terminus: Carboxy-S-adenosyl-L-methionine synthase (242 aa).

Residues Y38, 63–65 (GCS), 88–89 (DN), 116–117 (DL), and R199 contribute to the S-adenosyl-L-methionine site.

It belongs to the class I-like SAM-binding methyltransferase superfamily. Cx-SAM synthase family. In terms of assembly, homodimer.

The enzyme catalyses prephenate + S-adenosyl-L-methionine = carboxy-S-adenosyl-L-methionine + 3-phenylpyruvate + H2O. Functionally, catalyzes the conversion of S-adenosyl-L-methionine (SAM) to carboxy-S-adenosyl-L-methionine (Cx-SAM). This chain is Carboxy-S-adenosyl-L-methionine synthase, found in Methylococcus capsulatus (strain ATCC 33009 / NCIMB 11132 / Bath).